We begin with the raw amino-acid sequence, 119 residues long: Ribonuclease P protein component (119 aa).

Belongs to the RnpA family. As to quaternary structure, consists of a catalytic RNA component (M1 or rnpB) and a protein subunit.

The enzyme catalyses Endonucleolytic cleavage of RNA, removing 5'-extranucleotides from tRNA precursor.. RNaseP catalyzes the removal of the 5'-leader sequence from pre-tRNA to produce the mature 5'-terminus. It can also cleave other RNA substrates such as 4.5S RNA. The protein component plays an auxiliary but essential role in vivo by binding to the 5'-leader sequence and broadening the substrate specificity of the ribozyme. In Klebsiella pneumoniae (strain 342), this protein is Ribonuclease P protein component.